The following is a 212-amino-acid chain: TATA-box-binding protein 2 (212 aa).

2 tandem repeats follow at residues 30-114 (THPE…KKIG) and 120-201 (SNFN…YPIL).

It belongs to the TBP family. As to quaternary structure, belongs to the TFIID complex together with the TBP-associated factors (TAFs). Binds DNA as monomer.

It is found in the nucleus. In terms of biological role, general transcription factor that functions at the core of the DNA-binding multiprotein factor TFIID. Binding of TFIID to the TATA box is the initial transcriptional step of the pre-initiation complex (PIC), playing a role in the activation of eukaryotic genes transcribed by RNA polymerase II. This Entamoeba histolytica (strain ATCC 30459 / HM-1:IMSS / ABRM) protein is TATA-box-binding protein 2.